Reading from the N-terminus, the 303-residue chain is tRNA pseudouridine synthase B (303 aa).

The Nucleophile role is filled by Asp47.

Belongs to the pseudouridine synthase TruB family. Type 1 subfamily.

The enzyme catalyses uridine(55) in tRNA = pseudouridine(55) in tRNA. Its function is as follows. Responsible for synthesis of pseudouridine from uracil-55 in the psi GC loop of transfer RNAs. The chain is tRNA pseudouridine synthase B from Legionella pneumophila (strain Paris).